The chain runs to 307 residues: ADP,ATP carrier protein 3 (307 aa).

Solcar repeat units lie at residues 10–103 (TNFA…IKLM), 114–206 (KWFA…LKPL), and 214–300 (GSFL…LQMI). The next 5 helical transmembrane spans lie at 12-39 (FAIN…VKIL), 80-104 (TANV…KLMF), 112-132 (YGKW…LSLL), 182-203 (FMPS…FDSL), and 217-237 (LASF…SYPL). Positions 85 and 97 each coordinate ADP. Arginine 241 contacts ADP. An important for transport activity region spans residues 241–246 (RRRMMM). Positions 241–246 (RRRMMM) match the Nucleotide carrier signature motif motif. A helical membrane pass occupies residues 277-297 (CGANILRSVAGAGVISMYDQL).

It belongs to the mitochondrial carrier (TC 2.A.29) family. Monomer.

It is found in the mitochondrion inner membrane. It catalyses the reaction ADP(in) + ATP(out) = ADP(out) + ATP(in). Its activity is regulated as follows. The matrix-open state (m-state) is inhibited by the membrane-permeable bongkrekic acid (BKA). The cytoplasmic-open state (c-state) is inhibited by the membrane-impermeable toxic inhibitor carboxyatractyloside (CATR). In terms of biological role, ADP:ATP antiporter that mediates import of ADP into the mitochondrial matrix for ATP synthesis, and export of ATP out to fuel the cell. Cycles between the cytoplasmic-open state (c-state) and the matrix-open state (m-state): operates by the alternating access mechanism with a single substrate-binding site intermittently exposed to either the cytosolic (c-state) or matrix (m-state) side of the inner mitochondrial membrane. The sequence is that of ADP,ATP carrier protein 3 (AAC3) from Saccharomyces cerevisiae (strain ATCC 204508 / S288c) (Baker's yeast).